A 52-amino-acid polypeptide reads, in one-letter code: Conotoxin reg3h (52 aa).

Residue alanine 1 is a signal peptide. Residues 2–33 constitute a propeptide that is removed on maturation; it reads LPLDGDQPADQPAERMQDISPELNPLFHPVKR. 3 cysteine pairs are disulfide-bonded: cysteine 35/cysteine 49, cysteine 36/cysteine 47, and cysteine 41/cysteine 50. Residues proline 38, proline 48, and proline 51 each carry the 4-hydroxyproline modification. Asparagine 52 is modified (asparagine amide).

In terms of tissue distribution, expressed by the venom duct.

Its subcellular location is the secreted. The polypeptide is Conotoxin reg3h (Conus regius (Crown cone)).